A 391-amino-acid polypeptide reads, in one-letter code: tRNA (cytosine(38)-C(5))-methyltransferase (391 aa).

Residues 4–391 (LRVLELYSGI…VSKLLTVLCE (388 aa)) enclose the SAM-dependent MTase C5-type domain. S-adenosyl-L-methionine is bound by residues 13 to 15 (IGG), Asp-34, 57 to 58 (IE), and Ser-76. Cys-79 is a catalytic residue. Ser-376 contributes to the S-adenosyl-L-methionine binding site.

The protein belongs to the class I-like SAM-binding methyltransferase superfamily. C5-methyltransferase family.

The protein resides in the cytoplasm. It catalyses the reaction cytidine(38) in tRNA + S-adenosyl-L-methionine = 5-methylcytidine(38) in tRNA + S-adenosyl-L-homocysteine + H(+). In terms of biological role, specifically methylates cytosine 38 in the anticodon loop of tRNA(Asp). Has higher activity on tRNA(Asp) modified with queuosine at position 34. In Rattus norvegicus (Rat), this protein is tRNA (cytosine(38)-C(5))-methyltransferase (Trdmt1).